We begin with the raw amino-acid sequence, 349 residues long: DNA polymerase IV (349 aa).

Positions 7-188 constitute a UmuC domain; sequence IIHIDMDYFF…LPVKKLFGVG (182 aa). Mg(2+) is bound by residues D11 and D106. E107 is a catalytic residue.

This sequence belongs to the DNA polymerase type-Y family. In terms of assembly, monomer. Mg(2+) serves as cofactor.

Its subcellular location is the cytoplasm. The enzyme catalyses DNA(n) + a 2'-deoxyribonucleoside 5'-triphosphate = DNA(n+1) + diphosphate. Poorly processive, error-prone DNA polymerase involved in untargeted mutagenesis. Copies undamaged DNA at stalled replication forks, which arise in vivo from mismatched or misaligned primer ends. These misaligned primers can be extended by PolIV. Exhibits no 3'-5' exonuclease (proofreading) activity. May be involved in translesional synthesis, in conjunction with the beta clamp from PolIII. In Francisella tularensis subsp. holarctica (strain FTNF002-00 / FTA), this protein is DNA polymerase IV.